Reading from the N-terminus, the 649-residue chain is DNA topoisomerase 3 (649 aa).

In terms of domain architecture, Toprim spans 1 to 134; sequence MRLFIAEKPS…KRQQVRRCLI (134 aa). 3 residues coordinate Mg(2+): Glu-7, Asp-103, and Asp-105. One can recognise a Topo IA-type catalytic domain in the interval 155–603; it reads FVPLCVSALA…PLVGTLYQLI (449 aa). The segment at 194-199 is interaction with DNA; it reads SVGRVQ. Residue Tyr-328 is the O-(5'-phospho-DNA)-tyrosine intermediate of the active site. The disordered stretch occupies residues 614 to 649; that stretch reads FRGIVAPGGGDKKKSAPRKRAGKKSPPAAETGRQTE.

It belongs to the type IA topoisomerase family. Mg(2+) is required as a cofactor.

It catalyses the reaction ATP-independent breakage of single-stranded DNA, followed by passage and rejoining.. Functionally, releases the supercoiling and torsional tension of DNA, which is introduced during the DNA replication and transcription, by transiently cleaving and rejoining one strand of the DNA duplex. Introduces a single-strand break via transesterification at a target site in duplex DNA. The scissile phosphodiester is attacked by the catalytic tyrosine of the enzyme, resulting in the formation of a DNA-(5'-phosphotyrosyl)-enzyme intermediate and the expulsion of a 3'-OH DNA strand. The free DNA strand then undergoes passage around the unbroken strand, thus removing DNA supercoils. Finally, in the religation step, the DNA 3'-OH attacks the covalent intermediate to expel the active-site tyrosine and restore the DNA phosphodiester backbone. The polypeptide is DNA topoisomerase 3 (Salmonella typhimurium (strain LT2 / SGSC1412 / ATCC 700720)).